Here is a 337-residue protein sequence, read N- to C-terminus: ADP-ribosylation factor GTPase-activating protein AGD12 (337 aa).

One can recognise an Arf-GAP domain in the interval 15-137; it reads KRRIRDLLTQ…EFLKPSLRIT (123 aa). Residues 30–53 form a C4-type zinc finger; that stretch reads CADCGAPDPKWASANIGVFICLKC. One can recognise a C2 domain in the interval 164–281; the sequence is TNSSSQQPQL…AMAFGDPEMF (118 aa). Ca(2+) contacts are provided by D250, S253, and D256.

Requires Ca(2+) as cofactor. In terms of tissue distribution, expressed in roots, leaves, flowers and siliques. Low levels of expression in seeds and stems.

It is found in the golgi apparatus. Its subcellular location is the cell membrane. Functionally, GTPase-activating protein (GAP) for ADP ribosylation factor (ARF). Binds phosphatidylinositol 3-monophosohate (PI-3-P) and anionic phospholipids. The chain is ADP-ribosylation factor GTPase-activating protein AGD12 (AGD12) from Arabidopsis thaliana (Mouse-ear cress).